Reading from the N-terminus, the 234-residue chain is Sugar fermentation stimulation protein A (234 aa).

Residues 201–220 (LLSEAQNKGVEVLAYKAELS) constitute a DNA-binding region (H-T-H motif).

This sequence belongs to the SfsA family.

Binds to DNA non-specifically. Could be a regulatory factor involved in maltose metabolism. The sequence is that of Sugar fermentation stimulation protein A from Salmonella arizonae (strain ATCC BAA-731 / CDC346-86 / RSK2980).